A 945-amino-acid polypeptide reads, in one-letter code: Isoleucine--tRNA ligase 1 (945 aa).

The short motif at 66–76 (PYANGDIHLGH) is the 'HIGH' region element. Residue Glu-581 participates in L-isoleucyl-5'-AMP binding. Positions 622–626 (KMSKS) match the 'KMSKS' region motif. Residue Lys-625 participates in ATP binding. The Zn(2+) site is built by Cys-908, Cys-911, Cys-928, and Cys-931.

It belongs to the class-I aminoacyl-tRNA synthetase family. IleS type 1 subfamily. As to quaternary structure, monomer. Requires Zn(2+) as cofactor.

It localises to the cytoplasm. It catalyses the reaction tRNA(Ile) + L-isoleucine + ATP = L-isoleucyl-tRNA(Ile) + AMP + diphosphate. Functionally, catalyzes the attachment of isoleucine to tRNA(Ile). As IleRS can inadvertently accommodate and process structurally similar amino acids such as valine, to avoid such errors it has two additional distinct tRNA(Ile)-dependent editing activities. One activity is designated as 'pretransfer' editing and involves the hydrolysis of activated Val-AMP. The other activity is designated 'posttransfer' editing and involves deacylation of mischarged Val-tRNA(Ile). The sequence is that of Isoleucine--tRNA ligase 1 from Burkholderia mallei (strain ATCC 23344).